The chain runs to 165 residues: MVVAVYPGTFDPLTRGHEDLVRRASSIFDTLVVGVADSRAKKPFFSLEERLTIANEVLGHYPNVKVMSFTGLLKDFVRVNNARVIVRGLRAVSDFEYEFQMAGMNRYLLPDVETMFMTPSDQYQFISGTIVREIAQLGGDVSKFVFPSVEKWLTEKVTAMGGPAA.

Residue threonine 9 participates in substrate binding. ATP-binding positions include 9–10 (TF) and histidine 17. Substrate-binding residues include lysine 41, leucine 73, and arginine 87. Residues 88–90 (GLR), glutamate 98, and 123–129 (YQFISGT) contribute to the ATP site.

Belongs to the bacterial CoaD family. In terms of assembly, homohexamer. Mg(2+) serves as cofactor.

The protein resides in the cytoplasm. The catalysed reaction is (R)-4'-phosphopantetheine + ATP + H(+) = 3'-dephospho-CoA + diphosphate. It participates in cofactor biosynthesis; coenzyme A biosynthesis; CoA from (R)-pantothenate: step 4/5. Functionally, reversibly transfers an adenylyl group from ATP to 4'-phosphopantetheine, yielding dephospho-CoA (dPCoA) and pyrophosphate. In Burkholderia orbicola (strain MC0-3), this protein is Phosphopantetheine adenylyltransferase.